The chain runs to 204 residues: Photosystem I reaction center subunit II-2, chloroplastic (204 aa).

A chloroplast-targeting transit peptide spans 1–44; the sequence is MATQAAGIFSPAITTTTSAVKKLHLFSSSHRPKSLSFTKTAIRA. Phosphothreonine is present on threonine 47. Residues 47–71 are disordered; the sequence is TESSSAAPAVKEAPVGFTPPQLDPN. Residues 137 to 145 are ferredoxin and ferredoxin-oxidoreductase binding; it reads RLRSKYKIT.

Belongs to the PsaD family. Interacts with CURT1C.

Its subcellular location is the plastid. The protein resides in the chloroplast thylakoid membrane. PSAD can form complexes with ferredoxin and ferredoxin-oxidoreductase in photosystem I (PS I) reaction center. PSAD may encode the ferredoxin-docking protein. This Arabidopsis thaliana (Mouse-ear cress) protein is Photosystem I reaction center subunit II-2, chloroplastic (PSAD2).